Reading from the N-terminus, the 93-residue chain is MRGGNLKVLVVYDITDDSLRLKVAEILKDLGLFRIQKSAFIGEMTSQERENMEEILRRQNLGPSDRIDVFPICDRDLKMHSQIGRGKFGRGPP.

Aspartate 13 provides a ligand contact to Mg(2+).

Belongs to the CRISPR-associated endoribonuclease Cas2 protein family. In terms of assembly, homodimer, forms a heterotetramer with a Cas1 homodimer. Mg(2+) is required as a cofactor.

CRISPR (clustered regularly interspaced short palindromic repeat), is an adaptive immune system that provides protection against mobile genetic elements (viruses, transposable elements and conjugative plasmids). CRISPR clusters contain sequences complementary to antecedent mobile elements and target invading nucleic acids. CRISPR clusters are transcribed and processed into CRISPR RNA (crRNA). Functions as a ssRNA-specific endoribonuclease. Involved in the integration of spacer DNA into the CRISPR cassette. This is CRISPR-associated endoribonuclease Cas2 from Korarchaeum cryptofilum (strain OPF8).